Here is a 230-residue protein sequence, read N- to C-terminus: Large ribosomal subunit protein uL1 (230 aa).

This sequence belongs to the universal ribosomal protein uL1 family. As to quaternary structure, part of the 50S ribosomal subunit.

Functionally, binds directly to 23S rRNA. The L1 stalk is quite mobile in the ribosome, and is involved in E site tRNA release. Its function is as follows. Protein L1 is also a translational repressor protein, it controls the translation of the L11 operon by binding to its mRNA. The chain is Large ribosomal subunit protein uL1 from Erythrobacter litoralis (strain HTCC2594).